Consider the following 529-residue polypeptide: GTPase Obg (529 aa).

Residues 2-159 (ASFVDRVVLH…SDIVLELKSI (158 aa)) enclose the Obg domain. Residues 160–343 (ADIALVGFPS…LGFAMAEIVK (184 aa)) enclose the OBG-type G domain. Residues 166–173 (GFPSAGKS), 191–195 (FTTLI), 212–215 (DVPG), 295–298 (NKVD), and 324–326 (SAT) each bind GTP. Mg(2+) contacts are provided by serine 173 and threonine 193. Positions 363-447 (PRAVNEAGFK…DDGVVFDWEP (85 aa)) constitute an OCT domain. Over residues 466 to 502 (FADIGDRPTRGQKRDEQQERRDAKAAARAELEAERKA) the composition is skewed to basic and acidic residues. The disordered stretch occupies residues 466–529 (FADIGDRPTR…ESGLTTENEE (64 aa)).

This sequence belongs to the TRAFAC class OBG-HflX-like GTPase superfamily. OBG GTPase family. As to quaternary structure, monomer. Requires Mg(2+) as cofactor.

It localises to the cytoplasm. An essential GTPase which binds GTP, GDP and possibly (p)ppGpp with moderate affinity, with high nucleotide exchange rates and a fairly low GTP hydrolysis rate. Plays a role in control of the cell cycle, stress response, ribosome biogenesis and in those bacteria that undergo differentiation, in morphogenesis control. The polypeptide is GTPase Obg (Arthrobacter sp. (strain FB24)).